The chain runs to 230 residues: N-(5'-phosphoribosyl)anthranilate isomerase (230 aa).

Belongs to the TrpF family.

The enzyme catalyses N-(5-phospho-beta-D-ribosyl)anthranilate = 1-(2-carboxyphenylamino)-1-deoxy-D-ribulose 5-phosphate. The protein operates within amino-acid biosynthesis; L-tryptophan biosynthesis; L-tryptophan from chorismate: step 3/5. The sequence is that of N-(5'-phosphoribosyl)anthranilate isomerase from Trichodesmium erythraeum (strain IMS101).